Consider the following 188-residue polypeptide: Elongation factor P (188 aa).

Residue lysine 34 is modified to N6-(3,6-diaminohexanoyl)-5-hydroxylysine.

This sequence belongs to the elongation factor P family. May be beta-lysylated on the epsilon-amino group of Lys-34 by the combined action of EpmA and EpmB, and then hydroxylated on the C5 position of the same residue by EpmC (if this protein is present). Lysylation is critical for the stimulatory effect of EF-P on peptide-bond formation. The lysylation moiety may extend toward the peptidyltransferase center and stabilize the terminal 3-CCA end of the tRNA. Hydroxylation of the C5 position on Lys-34 may allow additional potential stabilizing hydrogen-bond interactions with the P-tRNA.

It localises to the cytoplasm. Its pathway is protein biosynthesis; polypeptide chain elongation. In terms of biological role, involved in peptide bond synthesis. Alleviates ribosome stalling that occurs when 3 or more consecutive Pro residues or the sequence PPG is present in a protein, possibly by augmenting the peptidyl transferase activity of the ribosome. Modification of Lys-34 is required for alleviation. The chain is Elongation factor P from Vibrio campbellii (strain ATCC BAA-1116).